The following is a 713-amino-acid chain: Cytosolic endo-beta-N-acetylglucosaminidase (713 aa).

The segment at M1–S36 is disordered. The BRCT domain occupies F270 to W362.

Belongs to the glycosyl hydrolase 85 family.

The protein localises to the cytoplasm. Its subcellular location is the cytosol. It catalyses the reaction an N(4)-(oligosaccharide-(1-&gt;3)-[oligosaccharide-(1-&gt;6)]-beta-D-Man-(1-&gt;4)-beta-D-GlcNAc-(1-&gt;4)-alpha-D-GlcNAc)-L-asparaginyl-[protein] + H2O = an oligosaccharide-(1-&gt;3)-[oligosaccharide-(1-&gt;6)]-beta-D-Man-(1-&gt;4)-D-GlcNAc + N(4)-(N-acetyl-beta-D-glucosaminyl)-L-asparaginyl-[protein]. Functionally, endoglycosidase that releases N-glycans from glycoproteins by cleaving the beta-1,4-glycosidic bond in the N,N'-diacetylchitobiose core. Involved in the processing of free oligosaccharides in the cytosol. This is Cytosolic endo-beta-N-acetylglucosaminidase (engase) from Danio rerio (Zebrafish).